The primary structure comprises 154 residues: Toxin YhaV (154 aa).

Homohexamer; forms a complex with PrlF (SohA) with stoichiometry PrlF(2)-YhaV(4), possibly as a YhaV(2)-PrlF(2)-YhaV(2) complex like the MazFE complex. May dimerize in solution.

Toxic component of a type II toxin-antitoxin (TA) system. Has RNase activity in vitro. Acts as a transcription factor. The YhaV/PrlF complex binds the prlF-yhaV operon, probably negatively regulating its expression. The sequence is that of Toxin YhaV (yhaV) from Escherichia coli O6:H1 (strain CFT073 / ATCC 700928 / UPEC).